The primary structure comprises 546 residues: ATP-dependent RNA helicase DBP2 (546 aa).

The segment at 1–56 (MTYGGRDQQYNKTNYKSRGGDFRGGRNSDRNSYNDRPQGGNYRGGFGGRSNYNQPQ) is disordered. 2 positions are modified to omega-N-methylarginine: R18 and R43. Basic and acidic residues predominate over residues 18 to 33 (RGGDFRGGRNSDRNSY). Residues S88 and S90 each carry the phosphoserine modification. The short motif at 113 to 141 (TTFDEAGFPDYVLNEVKAEGFDKPTGIQC) is the Q motif element. Residues 144–319 (WPMALSGRDM…ADYLNDPIQV (176 aa)) enclose the Helicase ATP-binding domain. Residue 157–164 (AATGSGKT) coordinates ATP. The short motif at 267 to 270 (DEAD) is the DEAD box element. A Helicase C-terminal domain is found at 347–494 (RLNKYLETAS…NIPPELLKYD (148 aa)). Residue K474 forms a Glycyl lysine isopeptide (Lys-Gly) (interchain with G-Cter in ubiquitin) linkage. Residues 493–546 (YDRRSYGGGHPRYGGGRGGRGGYGRRGGYGGGRGGYGGNRQRDGGWGNRGRSNY) form a disordered region. Over residues 498 to 540 (YGGGHPRYGGGRGGRGGYGRRGGYGGGRGGYGGNRQRDGGWGN) the composition is skewed to gly residues. An RNA-binding RGG-box region spans residues 505–530 (YGGGRGGRGGYGRRGGYGGGRGGYGG). 4 positions are modified to dimethylated arginine; alternate: R509, R512, R518, and R525. R509, R512, R518, and R525 each carry omega-N-methylarginine; alternate.

This sequence belongs to the DEAD box helicase family. DDX5/DBP2 subfamily. In terms of assembly, interacts with UPF1. Associates with polysomes.

Its subcellular location is the cytoplasm. It localises to the nucleus. It catalyses the reaction ATP + H2O = ADP + phosphate + H(+). Its function is as follows. ATP-dependent RNA helicase involved nonsense-mediated mRNA decay and ribosome biogenesis through rRNA processing. Associates directly with chromatin, correlating with transcriptional activity. Required for assembly of mRNA-binding proteins YRA1, NAB2, and MEX67 onto poly(A)+ RNA. In Saccharomyces cerevisiae (strain ATCC 204508 / S288c) (Baker's yeast), this protein is ATP-dependent RNA helicase DBP2.